We begin with the raw amino-acid sequence, 401 residues long: 3-oxoadipyl-CoA/3-oxo-5,6-dehydrosuberyl-CoA thiolase (401 aa).

Catalysis depends on C90, which acts as the Acyl-thioester intermediate. Catalysis depends on proton acceptor residues H357 and C387.

Belongs to the thiolase-like superfamily. Thiolase family.

The enzyme catalyses succinyl-CoA + acetyl-CoA = 3-oxoadipyl-CoA + CoA. The catalysed reaction is 2,3-didehydroadipoyl-CoA + acetyl-CoA = 3-oxo-5,6-didehydrosuberyl-CoA + CoA. It functions in the pathway aromatic compound metabolism; phenylacetate degradation. In terms of biological role, catalyzes the thiolytic cleavage of the beta-keto C8 intermediate 3-oxo-5,6-dehydrosuberyl-CoA with CoA to yield the C6 intermediate 2,3-dehydroadipyl-CoA and acetyl-CoA. Besides it catalyzes also the last step of the pathway, in which 3-oxoadipyl-CoA similarly is cleaved to acetyl-CoA and succinyl-CoA. This chain is 3-oxoadipyl-CoA/3-oxo-5,6-dehydrosuberyl-CoA thiolase (paaJ), found in Escherichia coli (strain K12).